A 197-amino-acid polypeptide reads, in one-letter code: Segregation and condensation protein B (197 aa).

The protein belongs to the ScpB family. As to quaternary structure, homodimer. Homodimerization may be required to stabilize the binding of ScpA to the Smc head domains. Component of a cohesin-like complex composed of ScpA, ScpB and the Smc homodimer, in which ScpA and ScpB bind to the head domain of Smc. The presence of the three proteins is required for the association of the complex with DNA.

The protein resides in the cytoplasm. Participates in chromosomal partition during cell division. May act via the formation of a condensin-like complex containing Smc and ScpA that pull DNA away from mid-cell into both cell halves. The sequence is that of Segregation and condensation protein B from Bacillus pumilus (strain SAFR-032).